Here is a 108-residue protein sequence, read N- to C-terminus: ATP synthase peripheral stalk subunit F6, mitochondrial (108 aa).

A mitochondrion-targeting transit peptide spans 1–32; it reads MVLQRIFRLSSVLRSAVSVHLKRNIGVTAVAF. N6-acetyllysine occurs at positions 41, 46, and 79. Lysine 84, lysine 94, and lysine 99 each carry N6-acetyllysine; alternate. 3 positions are modified to N6-succinyllysine; alternate: lysine 84, lysine 94, and lysine 99. An N6-acetyllysine modification is found at lysine 105. Residue serine 108 is modified to Phosphoserine.

Belongs to the eukaryotic ATPase subunit F6 family. In terms of assembly, component of the ATP synthase complex composed at least of ATP5F1A/subunit alpha, ATP5F1B/subunit beta, ATP5MC1/subunit c (homooctomer), MT-ATP6/subunit a, MT-ATP8/subunit 8, ATP5ME/subunit e, ATP5MF/subunit f, ATP5MG/subunit g, ATP5MK/subunit k, ATP5MJ/subunit j, ATP5F1C/subunit gamma, ATP5F1D/subunit delta, ATP5F1E/subunit epsilon, ATP5PF/subunit F6, ATP5PB/subunit b, ATP5PD/subunit d, ATP5PO/subunit OSCP. ATP synthase complex consists of a soluble F(1) head domain (subunits alpha(3) and beta(3)) - the catalytic core - and a membrane F(0) domain - the membrane proton channel (subunits c, a, 8, e, f, g, k and j). These two domains are linked by a central stalk (subunits gamma, delta, and epsilon) rotating inside the F1 region and a stationary peripheral stalk (subunits F6, b, d, and OSCP).

It localises to the mitochondrion. Its subcellular location is the mitochondrion inner membrane. Functionally, subunit F6, of the mitochondrial membrane ATP synthase complex (F(1)F(0) ATP synthase or Complex V) that produces ATP from ADP in the presence of a proton gradient across the membrane which is generated by electron transport complexes of the respiratory chain. ATP synthase complex consist of a soluble F(1) head domain - the catalytic core - and a membrane F(1) domain - the membrane proton channel. These two domains are linked by a central stalk rotating inside the F(1) region and a stationary peripheral stalk. During catalysis, ATP synthesis in the catalytic domain of F(1) is coupled via a rotary mechanism of the central stalk subunits to proton translocation. In vivo, can only synthesize ATP although its ATP hydrolase activity can be activated artificially in vitro. Part of the complex F(0) domain. Part of the complex F(0) domain and the peripheric stalk, which acts as a stator to hold the catalytic alpha(3)beta(3) subcomplex and subunit a/ATP6 static relative to the rotary elements. In Mus musculus (Mouse), this protein is ATP synthase peripheral stalk subunit F6, mitochondrial.